The sequence spans 225 residues: Uracil-DNA glycosylase (225 aa).

Residue Asp-61 is the Proton acceptor of the active site.

Belongs to the uracil-DNA glycosylase (UDG) superfamily. UNG family.

The protein resides in the cytoplasm. The enzyme catalyses Hydrolyzes single-stranded DNA or mismatched double-stranded DNA and polynucleotides, releasing free uracil.. Excises uracil residues from the DNA which can arise as a result of misincorporation of dUMP residues by DNA polymerase or due to deamination of cytosine. The polypeptide is Uracil-DNA glycosylase (Actinobacillus pleuropneumoniae serotype 5b (strain L20)).